The primary structure comprises 346 residues: Phosphoribosylformylglycinamidine cyclo-ligase (346 aa).

The protein belongs to the AIR synthase family.

Its subcellular location is the cytoplasm. The catalysed reaction is 2-formamido-N(1)-(5-O-phospho-beta-D-ribosyl)acetamidine + ATP = 5-amino-1-(5-phospho-beta-D-ribosyl)imidazole + ADP + phosphate + H(+). Its pathway is purine metabolism; IMP biosynthesis via de novo pathway; 5-amino-1-(5-phospho-D-ribosyl)imidazole from N(2)-formyl-N(1)-(5-phospho-D-ribosyl)glycinamide: step 2/2. The sequence is that of Phosphoribosylformylglycinamidine cyclo-ligase from Geobacillus sp. (strain WCH70).